We begin with the raw amino-acid sequence, 249 residues long: Serine acetyltransferase (249 aa).

The protein belongs to the transferase hexapeptide repeat family.

It is found in the cytoplasm. The enzyme catalyses L-serine + acetyl-CoA = O-acetyl-L-serine + CoA. Its pathway is amino-acid biosynthesis; L-cysteine biosynthesis; L-cysteine from L-serine: step 1/2. The chain is Serine acetyltransferase (cysE) from Synechocystis sp. (strain ATCC 27184 / PCC 6803 / Kazusa).